Reading from the N-terminus, the 184-residue chain is MKNVTDSFVSLGHWPFAGSFGFNTDILATNLINLSVVLGVLIFFGKGVLSDLLDNRKQRIWSTIRNSDELREVAIEQLEKARARLRKVEREADEFRVNGYSEIEREKWNLINATYENLERLENYKNETIHFEQQRAINQVRQRVFQQALQGALGTLNSRSNSELHLRTISANIGMLGAMKEITD.

The helical transmembrane segment at I26–V48 threads the bilayer.

The protein belongs to the ATPase B chain family. As to quaternary structure, F-type ATPases have 2 components, F(1) - the catalytic core - and F(0) - the membrane proton channel. F(1) has five subunits: alpha(3), beta(3), gamma(1), delta(1), epsilon(1). F(0) has four main subunits: a(1), b(1), b'(1) and c(10-14). The alpha and beta chains form an alternating ring which encloses part of the gamma chain. F(1) is attached to F(0) by a central stalk formed by the gamma and epsilon chains, while a peripheral stalk is formed by the delta, b and b' chains.

It is found in the plastid. The protein localises to the chloroplast thylakoid membrane. In terms of biological role, f(1)F(0) ATP synthase produces ATP from ADP in the presence of a proton or sodium gradient. F-type ATPases consist of two structural domains, F(1) containing the extramembraneous catalytic core and F(0) containing the membrane proton channel, linked together by a central stalk and a peripheral stalk. During catalysis, ATP synthesis in the catalytic domain of F(1) is coupled via a rotary mechanism of the central stalk subunits to proton translocation. Functionally, component of the F(0) channel, it forms part of the peripheral stalk, linking F(1) to F(0). The protein is ATP synthase subunit b, chloroplastic of Calycanthus floridus var. glaucus (Eastern sweetshrub).